The sequence spans 204 residues: Large ribosomal subunit protein bL25 (204 aa).

Belongs to the bacterial ribosomal protein bL25 family. CTC subfamily. As to quaternary structure, part of the 50S ribosomal subunit; part of the 5S rRNA/L5/L18/L25 subcomplex. Contacts the 5S rRNA. Binds to the 5S rRNA independently of L5 and L18.

Its function is as follows. This is one of the proteins that binds to the 5S RNA in the ribosome where it forms part of the central protuberance. The chain is Large ribosomal subunit protein bL25 from Burkholderia mallei (strain NCTC 10247).